A 943-amino-acid chain; its full sequence is Isoleucine--tRNA ligase (943 aa).

The short motif at 58–68 (PYANGSIHIGH) is the 'HIGH' region element. Position 567 (glutamate 567) interacts with L-isoleucyl-5'-AMP. The 'KMSKS' region signature appears at 608 to 612 (KMSKS). Lysine 611 contributes to the ATP binding site. Residues cysteine 906, cysteine 909, cysteine 926, and cysteine 929 each coordinate Zn(2+).

Belongs to the class-I aminoacyl-tRNA synthetase family. IleS type 1 subfamily. In terms of assembly, monomer. Zn(2+) is required as a cofactor.

The protein localises to the cytoplasm. It catalyses the reaction tRNA(Ile) + L-isoleucine + ATP = L-isoleucyl-tRNA(Ile) + AMP + diphosphate. Its function is as follows. Catalyzes the attachment of isoleucine to tRNA(Ile). As IleRS can inadvertently accommodate and process structurally similar amino acids such as valine, to avoid such errors it has two additional distinct tRNA(Ile)-dependent editing activities. One activity is designated as 'pretransfer' editing and involves the hydrolysis of activated Val-AMP. The other activity is designated 'posttransfer' editing and involves deacylation of mischarged Val-tRNA(Ile). This chain is Isoleucine--tRNA ligase, found in Ectopseudomonas mendocina (strain ymp) (Pseudomonas mendocina).